The following is a 396-amino-acid chain: Putative nickel insertion protein (396 aa).

This sequence belongs to the LarC family.

The sequence is that of Putative nickel insertion protein from Methanosarcina barkeri (strain Fusaro / DSM 804).